Reading from the N-terminus, the 248-residue chain is tRNA pseudouridine synthase A (248 aa).

Residue aspartate 53 is the Nucleophile of the active site. Tyrosine 111 lines the substrate pocket.

This sequence belongs to the tRNA pseudouridine synthase TruA family. Homodimer.

The catalysed reaction is uridine(38/39/40) in tRNA = pseudouridine(38/39/40) in tRNA. Formation of pseudouridine at positions 38, 39 and 40 in the anticodon stem and loop of transfer RNAs. This is tRNA pseudouridine synthase A from Listeria monocytogenes serotype 4b (strain CLIP80459).